Reading from the N-terminus, the 1910-residue chain is Endoribonuclease dcr-1 (1910 aa).

Residues 20–201 (LLDKATKKNT…KLMEQLKKLE (182 aa)) enclose the Helicase ATP-binding domain. An ATP-binding site is contributed by 33-40 (LGTGSGKT). The DEAH box motif lies at 145 to 148 (DECH). Residues 371 to 542 (EFQKERMKLE…TVNNPIEDDS (172 aa)) enclose the Helicase C-terminal domain. The region spanning 571–667 (AIALINRYCS…LPKGRESIAK (97 aa)) is the Dicer dsRNA-binding fold domain. The 159-residue stretch at 845–1003 (YVSEVVANME…LVPELMDIHP (159 aa)) folds into the PAZ domain. Disordered regions lie at residues 951–988 (RIQN…VPHS), 1227–1248 (TASS…KQLT), and 1272–1309 (LEMS…PTNF). Composition is skewed to polar residues over residues 970–988 (IPQA…VPHS) and 1227–1245 (TASS…SPPK). A coiled-coil region spans residues 1245-1280 (KQLTKEEEQFKKLQNDLLKQAKERLEALEMSEDMEK). Over residues 1272–1286 (LEMSEDMEKPRRLED) the composition is skewed to basic and acidic residues. The segment covering 1288–1304 (VNLEDYGDDQENQEDEN) has biased composition (acidic residues). RNase III domains follow at residues 1381–1589 (VSHI…LTLG) and 1643–1805 (FTQL…LDSG). Mg(2+) contacts are provided by Glu-1682, Asp-1791, and Glu-1794. The DRBM domain maps to 1833–1896 (SPIRELMEFE…AKRALKYLHQ (64 aa)).

This sequence belongs to the helicase family. Dicer subfamily. In terms of assembly, component of the ERI/DICER complex at least composed of dcr-1, rrf-3 and eri-1. Interacts with pir-1. The cofactor is Mg(2+). Mn(2+) is required as a cofactor.

Functionally, component of the ERI/DICER complex which is involved in processing amplified double-stranded RNA (dsRNA) intermediates during small-RNA-mediated gene-silencing or RNA interference (RNAi). Involved in cleaving dsRNA in the RNAi pathway. It produces 21 to 23 bp dsRNAs (siRNAs) which target the selective destruction of homologous RNAs. Seems to process the precursor of the small temporal RNA let-7 which is involved in developmental timing. Required for avoidance behavior induced by small RNAs derived from pathogenic bacteria such as P.aeruginosa. Involved in innate immunity through its role in small RNA processing. TDCR-1 acts as a deoxyribonuclease (DNase) initiating DNA fragmentation during apoptosis, upstream of nucleases cps-6, crn-2 and nuc-1. This chain is Endoribonuclease dcr-1, found in Caenorhabditis elegans.